The chain runs to 429 residues: Histidine--tRNA ligase (429 aa).

The protein belongs to the class-II aminoacyl-tRNA synthetase family. As to quaternary structure, homodimer.

Its subcellular location is the cytoplasm. The enzyme catalyses tRNA(His) + L-histidine + ATP = L-histidyl-tRNA(His) + AMP + diphosphate + H(+). The chain is Histidine--tRNA ligase from Streptococcus pneumoniae (strain JJA).